The chain runs to 482 residues: MNAAEIVMPALGPALPELILTVGALVLILYGALRGERSTEGVTVGAIIVLIVALFSVVSQPLGAKITTFNGSFIVDGFARVMKTLTLVGSLAALLLARDLFARERIERFEYPILIVLSSIGMLIMASANDLIGLYLGLELQSLAAYVIASFHRDDVRSTEAGLKYFVLGALSSGMLLYGASLVYGFTGSVSFPGIVTALREAHAGLGLVLGIVFVAAGVAFKLAAVPFHMWTPDVYEGAPTPVTAFFASAPKMAAMAMTVRVFIGAFPGVVAEWQQIIVFIAIASMALGSFAAIGQRNLKRLMAYSSIGNVGYALIGLAAGTEEGVRGVVVYMAIYLAMTLGAFAVILGMRRGNRMFETIEDLSGLSRTHPWLAFCLAMMMFSLAGIPPLAGFFAKFYVFAAAIKAGLNVLAVIGVVTSVVGAYYYVRIVKIMYFDDAQAAYEPLAPGLRIVLAASSVVVVLFWIVPAPLVAAAGTAARSLF.

Helical transmembrane passes span 10-30 (ALGP…LILY), 44-64 (VGAI…PLGA), 77-97 (GFAR…LLLA), 113-133 (ILIV…DLIG), 166-186 (FVLG…VYGF), 206-226 (LGLV…LAAV), 243-265 (VTAF…VFIG), 277-296 (IIVF…AIGQ), 302-322 (LMAY…AAGT), 328-348 (GVVV…AVIL), 374-394 (AFCL…AGFF), 397-417 (FYVF…IGVV), and 451-471 (IVLA…APLV).

This sequence belongs to the complex I subunit 2 family. NDH-1 is composed of 14 different subunits. Subunits NuoA, H, J, K, L, M, N constitute the membrane sector of the complex.

Its subcellular location is the cell inner membrane. It carries out the reaction a quinone + NADH + 5 H(+)(in) = a quinol + NAD(+) + 4 H(+)(out). NDH-1 shuttles electrons from NADH, via FMN and iron-sulfur (Fe-S) centers, to quinones in the respiratory chain. The immediate electron acceptor for the enzyme in this species is believed to be ubiquinone. Couples the redox reaction to proton translocation (for every two electrons transferred, four hydrogen ions are translocated across the cytoplasmic membrane), and thus conserves the redox energy in a proton gradient. The protein is NADH-quinone oxidoreductase subunit N of Methylobacterium nodulans (strain LMG 21967 / CNCM I-2342 / ORS 2060).